A 154-amino-acid polypeptide reads, in one-letter code: UPF0178 protein YaiI (154 aa).

Belongs to the UPF0178 family.

The protein is UPF0178 protein YaiI of Escherichia coli (strain ATCC 8739 / DSM 1576 / NBRC 3972 / NCIMB 8545 / WDCM 00012 / Crooks).